The chain runs to 84 residues: ATPase-stabilizing factor 15 kDa protein (84 aa).

Over residues 1–18 (MTRTNKWTEREGKADPKY) the composition is skewed to basic and acidic residues. The tract at residues 1–84 (MTRTNKWTER…EQKFENVQKE (84 aa)) is disordered. 2 positions are modified to phosphoserine: Ser28 and Ser69. Positions 74–84 (HEQKFENVQKE) are enriched in basic and acidic residues.

The protein belongs to the STF2 family.

It is found in the mitochondrion. It localises to the cytoplasm. In terms of biological role, found to stabilize, together with STF1, a complex of intrinsic ATPase inhibitor INH1 and proton-translocating ATPase (F(1)F(0)-ATPase) in mitochondrial membranes. Binds to the F0 part and may function to hold the ATPase inhibitor or STF1 on the F1 subunit. Also acts as a hydrophilins that enhances dry stress tolerance. Cell viability after desiccation and rehydration is due to the antioxidant capacity of the protein, which reduces the number of apoptotic cells during stress conditions by minimising the accumulation of reactive oxygen species (ROS) in the cells. The chain is ATPase-stabilizing factor 15 kDa protein (STF2) from Saccharomyces cerevisiae (strain ATCC 204508 / S288c) (Baker's yeast).